Here is a 380-residue protein sequence, read N- to C-terminus: Enoyl-[acyl-carrier-protein] reductase, mitochondrial (380 aa).

Residues 1-9 (MLPTFKRYM) constitute a mitochondrion transit peptide. Tyrosine 73 (proton donor) is an active-site residue. NADP(+) contacts are provided by residues asparagine 157, 185-188 (TSSV), 208-210 (RDR), 283-286 (YGGM), and 308-310 (YWV). Serine 339 bears the Phosphoserine mark. Lysine 373 provides a ligand contact to NADP(+).

This sequence belongs to the zinc-containing alcohol dehydrogenase family. Quinone oxidoreductase subfamily. Homodimer or in a complex with other proteins. Interacts with ARS1.

The protein localises to the mitochondrion matrix. The catalysed reaction is a 2,3-saturated acyl-[ACP] + NADP(+) = a (2E)-enoyl-[ACP] + NADPH + H(+). It carries out the reaction (2E,4E)-hexadienoyl-CoA + NADPH + H(+) = (4E)-hexenoyl-CoA + NADP(+). The enzyme catalyses (2E)-hexenoyl-CoA + NADPH + H(+) = hexanoyl-CoA + NADP(+). Its function is as follows. Catalyzes the NADPH-dependent reduction of trans-2-enoyl thioesters in mitochondrial fatty acid synthesis (fatty acid synthesis type II). Fatty acid chain elongation in mitochondria uses acyl carrier protein (ACP) as an acyl group carrier, but the enzyme accepts both ACP and CoA thioesters as substrates in vitro. Required for respiration and the maintenance of the mitochondrial compartment. This Saccharomyces cerevisiae (strain ATCC 204508 / S288c) (Baker's yeast) protein is Enoyl-[acyl-carrier-protein] reductase, mitochondrial (ETR1).